We begin with the raw amino-acid sequence, 506 residues long: UDP-N-acetylglucosamine--peptide N-acetylglucosaminyltransferase GtfA subunit (506 aa).

Residue 16 to 19 participates in UDP binding; the sequence is GVEY. Residue H241 participates in N-acetyl-D-glucosamine binding. A UDP-binding site is contributed by 384–385; sequence HK. 404-407 contributes to the N-acetyl-D-glucosamine binding site; the sequence is EGFG.

It belongs to the glycosyltransferase group 1 family. Glycosyltransferase 4 subfamily. In terms of assembly, interacts with stabilizing protein GtfB (Gtf2), probably as a heterotetramer with 2 subunits each of GtfA and GtfB, part of the accessory SecA2/SecY2 protein translocation apparatus.

Its subcellular location is the cytoplasm. The protein resides in the cell membrane. The catalysed reaction is L-seryl-[protein] + UDP-N-acetyl-alpha-D-glucosamine = 3-O-[N-acetyl-alpha-D-glucosaminyl]-L-seryl-[protein] + UDP + H(+). It participates in protein modification; protein glycosylation. In terms of biological role, required for polymorphic O-glycosylation of the serine-rich repeat protein Srr2. Catalyzes the first step in glycosylation by transferring N-acetylglucosamine from UDP-GlcNAc to serine residues of Srr2. Part of the accessory SecA2/SecY2 system specifically required to export serine-rich repeat proteins, probably Srr2 in this organism. The GtfA-GtfB (Gtf1-Gtf2 in this bacteria) complex adds GlcNAc from UDP-GlcNAc to Srr2 substrate. This subunit has low glycosyltransferase activity; GtfB enhances glycosyltransferase activity in vitro. Upon expression in S.parasanguis GtfA/GtfB restores expression of serine-rich repeat protein Fap1 and complements a biofilm formation defect. The protein is UDP-N-acetylglucosamine--peptide N-acetylglucosaminyltransferase GtfA subunit of Streptococcus agalactiae.